Here is a 268-residue protein sequence, read N- to C-terminus: Energy-coupling factor transporter transmembrane protein EcfT (268 aa).

Helical transmembrane passes span 29-49 (VFIF…TVAV), 75-95 (IIIV…EVIV), 107-127 (LIEG…ASLL), 152-172 (LPTH…PTLI), and 242-262 (WGLK…AVMA).

The protein belongs to the energy-coupling factor EcfT family. Forms a stable energy-coupling factor (ECF) transporter complex composed of 2 membrane-embedded substrate-binding proteins (S component), 2 ATP-binding proteins (A component) and 2 transmembrane proteins (T component). May be able to interact with more than 1 S component at a time.

The protein localises to the cell membrane. Functionally, transmembrane (T) component of an energy-coupling factor (ECF) ABC-transporter complex. Unlike classic ABC transporters this ECF transporter provides the energy necessary to transport a number of different substrates. The protein is Energy-coupling factor transporter transmembrane protein EcfT of Bacillus selenitireducens (strain ATCC 700615 / DSM 15326 / MLS10).